Consider the following 281-residue polypeptide: Ribosomal RNA small subunit methyltransferase A (281 aa).

Positions 21, 23, 48, 69, 92, and 113 each coordinate S-adenosyl-L-methionine.

The protein belongs to the class I-like SAM-binding methyltransferase superfamily. rRNA adenine N(6)-methyltransferase family. RsmA subfamily.

It localises to the cytoplasm. The catalysed reaction is adenosine(1518)/adenosine(1519) in 16S rRNA + 4 S-adenosyl-L-methionine = N(6)-dimethyladenosine(1518)/N(6)-dimethyladenosine(1519) in 16S rRNA + 4 S-adenosyl-L-homocysteine + 4 H(+). Specifically dimethylates two adjacent adenosines (A1518 and A1519) in the loop of a conserved hairpin near the 3'-end of 16S rRNA in the 30S particle. May play a critical role in biogenesis of 30S subunits. This is Ribosomal RNA small subunit methyltransferase A from Ralstonia nicotianae (strain ATCC BAA-1114 / GMI1000) (Ralstonia solanacearum).